A 189-amino-acid chain; its full sequence is UPF0149 protein VSAL_I2539 (189 aa).

It belongs to the UPF0149 family.

This is UPF0149 protein VSAL_I2539 from Aliivibrio salmonicida (strain LFI1238) (Vibrio salmonicida (strain LFI1238)).